The following is a 62-amino-acid chain: MAIHDANYIVSTSEFSSGVLISNFLLFNFIIISHSSLLSNTTTTTTTTTTTTNTKSTLHRSG.

Residues 15-37 (FSSGVLISNFLLFNFIIISHSSL) traverse the membrane as a helical segment. Low complexity predominate over residues 41 to 56 (TTTTTTTTTTTTNTKS). The tract at residues 41 to 62 (TTTTTTTTTTTTNTKSTLHRSG) is disordered.

The protein resides in the membrane. This is an uncharacterized protein from Dictyostelium discoideum (Social amoeba).